Here is a 77-residue protein sequence, read N- to C-terminus: Exodeoxyribonuclease 7 small subunit (77 aa).

Belongs to the XseB family. As to quaternary structure, heterooligomer composed of large and small subunits.

The protein localises to the cytoplasm. It carries out the reaction Exonucleolytic cleavage in either 5'- to 3'- or 3'- to 5'-direction to yield nucleoside 5'-phosphates.. Bidirectionally degrades single-stranded DNA into large acid-insoluble oligonucleotides, which are then degraded further into small acid-soluble oligonucleotides. The chain is Exodeoxyribonuclease 7 small subunit from Carboxydothermus hydrogenoformans (strain ATCC BAA-161 / DSM 6008 / Z-2901).